A 186-amino-acid chain; its full sequence is Elongation factor P (186 aa).

Belongs to the elongation factor P family.

It is found in the cytoplasm. The protein operates within protein biosynthesis; polypeptide chain elongation. Its function is as follows. Involved in peptide bond synthesis. Stimulates efficient translation and peptide-bond synthesis on native or reconstituted 70S ribosomes in vitro. Probably functions indirectly by altering the affinity of the ribosome for aminoacyl-tRNA, thus increasing their reactivity as acceptors for peptidyl transferase. The chain is Elongation factor P from Prochlorococcus marinus (strain MIT 9515).